Reading from the N-terminus, the 113-residue chain is Ig heavy chain V-III region ABE-47N (113 aa).

The 113-residue stretch at 1-113 folds into the Ig-like domain; sequence EVKLEESGGG…YWGQGTLVTV (113 aa). Residues Cys22 and Cys98 are joined by a disulfide bond.

This is Ig heavy chain V-III region ABE-47N from Mus musculus (Mouse).